We begin with the raw amino-acid sequence, 409 residues long: Regulator of Ty1 transposition protein 103 (409 aa).

Residues 1 to 135 (MPFSSEQFTT…DIERSLKTES (135 aa)) enclose the CID domain. Positions 250 to 409 (LNKNVDEDNI…IQDLLSKLAN (160 aa)) are disordered. Residues 266–289 (GDGDDDDDDGDNDDDDDDDDDDKN) show a composition bias toward acidic residues. 3 stretches are compositionally biased toward basic and acidic residues: residues 307–323 (TDKK…EHKN), 337–363 (RTHD…KTSE), and 370–380 (EDGHYELDIEG).

It belongs to the UPF0400 (RTT103) family. As to quaternary structure, interacts with PCF11, RAI1, RAT1, RPO21 and RBP2.

It is found in the nucleus. Functionally, involved in transcription termination by RNA polymerase II and in regulation of Ty1 transposition. This Saccharomyces cerevisiae (strain ATCC 204508 / S288c) (Baker's yeast) protein is Regulator of Ty1 transposition protein 103 (RTT103).